The following is a 104-amino-acid chain: Integration host factor subunit alpha (104 aa).

Belongs to the bacterial histone-like protein family. Heterodimer of an alpha and a beta chain.

Functionally, this protein is one of the two subunits of integration host factor, a specific DNA-binding protein that functions in genetic recombination as well as in transcriptional and translational control. The protein is Integration host factor subunit alpha of Buchnera aphidicola subsp. Cinara cedri (strain Cc).